The following is a 199-amino-acid chain: Pyridoxine/pyridoxamine 5'-phosphate oxidase (199 aa).

FMN contacts are provided by residues 44–49, 59–60, Lys-66, and Gln-91; these read RTVLLK and YT. Residue Lys-49 participates in substrate binding. Substrate-binding residues include Tyr-109, Arg-113, and Ser-117. FMN contacts are provided by residues 126–127 and Trp-171; that span reads QS. Position 177–179 (177–179) interacts with substrate; the sequence is RLH. An FMN-binding site is contributed by Arg-181.

Belongs to the pyridoxamine 5'-phosphate oxidase family. Homodimer. FMN serves as cofactor.

The enzyme catalyses pyridoxamine 5'-phosphate + O2 + H2O = pyridoxal 5'-phosphate + H2O2 + NH4(+). It carries out the reaction pyridoxine 5'-phosphate + O2 = pyridoxal 5'-phosphate + H2O2. The protein operates within cofactor metabolism; pyridoxal 5'-phosphate salvage; pyridoxal 5'-phosphate from pyridoxamine 5'-phosphate: step 1/1. Its pathway is cofactor metabolism; pyridoxal 5'-phosphate salvage; pyridoxal 5'-phosphate from pyridoxine 5'-phosphate: step 1/1. In terms of biological role, catalyzes the oxidation of either pyridoxine 5'-phosphate (PNP) or pyridoxamine 5'-phosphate (PMP) into pyridoxal 5'-phosphate (PLP). The protein is Pyridoxine/pyridoxamine 5'-phosphate oxidase of Xanthomonas campestris pv. campestris (strain 8004).